The sequence spans 435 residues: 3-ketoacyl-CoA thiolase (435 aa).

The active-site Acyl-thioester intermediate is Cys-98. Active-site proton acceptor residues include His-391 and Cys-421.

Belongs to the thiolase-like superfamily. Thiolase family. In terms of assembly, heterotetramer of two alpha chains (FadJ) and two beta chains (FadI).

The protein localises to the cytoplasm. It carries out the reaction an acyl-CoA + acetyl-CoA = a 3-oxoacyl-CoA + CoA. Its pathway is lipid metabolism; fatty acid beta-oxidation. Catalyzes the final step of fatty acid oxidation in which acetyl-CoA is released and the CoA ester of a fatty acid two carbons shorter is formed. This Colwellia psychrerythraea (strain 34H / ATCC BAA-681) (Vibrio psychroerythus) protein is 3-ketoacyl-CoA thiolase.